Here is a 341-residue protein sequence, read N- to C-terminus: tRNA N6-adenosine threonylcarbamoyltransferase (341 aa).

The Fe cation site is built by H117 and H121. Substrate is bound by residues V140–G144, D173, G186, and N278. D306 lines the Fe cation pocket.

Belongs to the KAE1 / TsaD family. The cofactor is Fe(2+).

It is found in the cytoplasm. The catalysed reaction is L-threonylcarbamoyladenylate + adenosine(37) in tRNA = N(6)-L-threonylcarbamoyladenosine(37) in tRNA + AMP + H(+). Its function is as follows. Required for the formation of a threonylcarbamoyl group on adenosine at position 37 (t(6)A37) in tRNAs that read codons beginning with adenine. Is involved in the transfer of the threonylcarbamoyl moiety of threonylcarbamoyl-AMP (TC-AMP) to the N6 group of A37, together with TsaE and TsaB. TsaD likely plays a direct catalytic role in this reaction. The protein is tRNA N6-adenosine threonylcarbamoyltransferase of Symbiobacterium thermophilum (strain DSM 24528 / JCM 14929 / IAM 14863 / T).